Here is a 159-residue protein sequence, read N- to C-terminus: Pupal cuticle protein Edg-91 (159 aa).

The first 21 residues, 1 to 21 (MALVRVSCMLALLLIAGQGQA), serve as a signal peptide directing secretion.

In terms of tissue distribution, larval (posterior) and imaginal (anterior) epidermis.

Component of the pupal cuticle. The protein is Pupal cuticle protein Edg-91 (Edg91) of Drosophila melanogaster (Fruit fly).